Consider the following 273-residue polypeptide: Hydroxyethylthiazole kinase (273 aa).

M49 serves as a coordination point for substrate. Residues R125 and T171 each coordinate ATP. G198 serves as a coordination point for substrate.

The protein belongs to the Thz kinase family. Mg(2+) serves as cofactor.

The catalysed reaction is 5-(2-hydroxyethyl)-4-methylthiazole + ATP = 4-methyl-5-(2-phosphooxyethyl)-thiazole + ADP + H(+). Its pathway is cofactor biosynthesis; thiamine diphosphate biosynthesis; 4-methyl-5-(2-phosphoethyl)-thiazole from 5-(2-hydroxyethyl)-4-methylthiazole: step 1/1. In terms of biological role, catalyzes the phosphorylation of the hydroxyl group of 4-methyl-5-beta-hydroxyethylthiazole (THZ). The sequence is that of Hydroxyethylthiazole kinase from Desulforudis audaxviator (strain MP104C).